A 335-amino-acid polypeptide reads, in one-letter code: Ficolin-1 (335 aa).

A signal peptide spans 1-17 (MWWPMLWAFPVLLCLCS). The interval 47 to 114 (SCPSFPGPPG…TASPLGQKEL (68 aa)) is disordered. The 39-residue stretch at 50–88 (SFPGPPGPKGEPGSPAGRGERGLQGSPGKMGPPGSKGEP) folds into the Collagen-like domain. The segment covering 75–88 (SPGKMGPPGSKGEP) has biased composition (low complexity). Positions 117 to 335 (ALCRRGPRSC…KVAEMKIRAS (219 aa)) constitute a Fibrinogen C-terminal domain. 2 disulfides stabilise this stretch: Cys119-Cys147 and Cys126-Cys154. The tract at residues 123–162 (PRSCKDLLTRGIFLTGWYTIYLPDCRPLTVLCDMDVDGGG) is a domain; contributes to trimerization. Residues 163–251 (WTVFQRRVDG…LTLGQFLEGT (89 aa)) are b domain; contributes to trimerization. Asp270 lines the Ca(2+) pocket. N-linked (GlcNAc...) asparagine glycosylation is present at Asn271. Residue Asp272 participates in Ca(2+) binding. Cys279 and Cys292 are disulfide-bonded. 291 to 293 (DCH) contacts a carbohydrate. Positions 326–335 (KVAEMKIRAS) are p domain.

The protein belongs to the ficolin lectin family. In terms of assembly, homotrimer. Interacts with elastin/ELN. Interacts (via Fibrinogen C-terminal domain) with FFAR2. Interacts with CRP; may regulate monocyte activation by FCN1.

Its subcellular location is the secreted. The protein localises to the cell membrane. Functionally, extracellular lectin functioning as a pattern-recognition receptor in innate immunity. Binds the sugar moieties of pathogen-associated molecular patterns (PAMPs) displayed on microbes and activates the lectin pathway of the complement system. May also activate monocytes through a G protein-coupled receptor, FFAR2, inducing the secretion of interleukin-8/IL-8. Binds preferentially to 9-O-acetylated 2-6-linked sialic acid derivatives and to various glycans containing sialic acid engaged in a 2-3 linkage. This is Ficolin-1 (Fcn1) from Rattus norvegicus (Rat).